The sequence spans 634 residues: ATP-dependent clpX-like chaperone, mitochondrial (634 aa).

A mitochondrion-targeting transit peptide spans 1 to 56; sequence MSSCGACTCGAAAARLLTTSLTSAQRGISCGRIHVPVLGRLGTTLDAQALRRAPLR. Residues 69 to 102 form a disordered region; the sequence is DGANKDGSGDGNKKSVTEGSSKKSGSGNSGKGGN. Basic and acidic residues predominate over residues 70–84; it reads GANKDGSGDGNKKSV. Over residues 85–94 the composition is skewed to low complexity; the sequence is TEGSSKKSGS. In terms of domain architecture, ClpX-type ZB spans 94-147; that stretch reads SGNSGKGGNQLRCPKCGDLCTHVETFVSSTRFVKCEKCHHFFVVLSEADSKKSI. The Zn(2+) site is built by C106, C109, C128, and C131. 295–302 contributes to the ATP binding site; sequence PTGSGKTL. An N6-acetyllysine modification is found at K438. Over residues 599-611 the composition is skewed to basic and acidic residues; it reads KEPGYIRAPSKES. The segment at 599-634 is disordered; it reads KEPGYIRAPSKESSEEEYDSGVEEDGWPRQADAANS. The span at 612–623 shows a compositional bias: acidic residues; that stretch reads SEEEYDSGVEED. Position 618 is a phosphoserine (S618).

The protein belongs to the ClpX chaperone family. Homohexamer that forms a ring structure; this hexamerization requires ATP binding. Component of the ClpXP complex formed by the assembly of two CLPP heptameric rings with two CLPX hexameric rings, giving rise to a symmetrical structure with two central CLPP rings flanked by a CLPX ring at either end of the complex. Interacts with TFAM. Detected in liver (at protein level).

The protein resides in the mitochondrion. It is found in the mitochondrion matrix. It localises to the mitochondrion nucleoid. It catalyses the reaction ATP + H2O = ADP + phosphate + H(+). ATP-dependent chaperone that functions as an unfoldase. As part of the ClpXP protease complex, it recognizes specific protein substrates, unfolds them using energy derived from ATP hydrolysis, and then translocates them to the proteolytic subunit (CLPP) of the ClpXP complex for degradation. Thanks to its chaperone activity, it also functions in the incorporation of the pyridoxal phosphate cofactor into 5-aminolevulinate synthase, thereby activating 5-aminolevulinate (ALA) synthesis, the first step in heme biosynthesis. This chaperone is also involved in the control of mtDNA nucleoid distribution, by regulating mitochondrial transcription factor A (TFAM) activity. This is ATP-dependent clpX-like chaperone, mitochondrial from Mus musculus (Mouse).